Reading from the N-terminus, the 524-residue chain is Probable endopeptidase p60 (524 aa).

The N-terminal stretch at 1 to 27 is a signal peptide; it reads MNMKKATIAATAGIAVTAFAAPTIASA. One can recognise a LysM 1 domain in the interval 28-71; the sequence is STVVVEAGDTLWGIAQSKGTTVDALKKANNLTSDKIVPGQKLQV. Residues 78 to 142 enclose the SH3b domain; that stretch reads KTEKSVSATW…VNGKYLGDAV (65 aa). Residues 150–188 form a disordered region; the sequence is QEVKQETTKQTAPAAETKTEVKQSTPAPTAPKAAETKTA. The segment covering 174–188 has biased composition (low complexity); sequence TPAPTAPKAAETKTA. A LysM 2 domain is found at 196-239; the sequence is TTHTVKSGDTIWALSVKYGASVQDLMSWNNLSSSSIYVGQKIAV. The segment covering 272 to 299 has biased composition (low complexity); the sequence is NTNTTVKKEVTTQTQTNTTKAPAQAAKP. Residues 272-313 are disordered; the sequence is NTNTTVKKEVTTQTQTNTTKAPAQAAKPAPAPAPAPTVNTNA. The LysM 3 domain occupies 314-357; that stretch reads STYTVKSGDSLSKIANTFGTSVSKIKALNNLTSDNLQVGTVLKV. The disordered stretch occupies residues 360-408; the sequence is TVPTTNTNNNSNTTAPTTNTSNNNTSSNTSTPSKNTNTNTNQGSSNSAS. Low complexity predominate over residues 362-408; sequence PTTNTNNNSNTTAPTTNTSNNNTSSNTSTPSKNTNTNTNQGSSNSAS. The NlpC/P60 domain occupies 406–524; that stretch reads SASASALIAE…GKYLVGFGRV (119 aa). Catalysis depends on cysteine 436, which acts as the Nucleophile. Histidine 486 acts as the Proton acceptor in catalysis. Asparagine 498 is an active-site residue.

This sequence belongs to the peptidase C40 family.

Functionally, this major extracellular protein may be involved in the invasion of non-professional phagocytic cells by Listeria. This chain is Probable endopeptidase p60 (iap), found in Listeria welshimeri.